The following is a 142-amino-acid chain: MTDRLTQLQQCLDQIVEQFGSAITYVDRNHDFEPHNELEDKLSDPQATIAAAEDFDRNIDELTTDMILKTRQIIKLIDSLPGVDVSAEEQLSRIDSLQKKLIQVEGEKIEAIKRKESLTKDIEELINEFTEGIANSRRLNKA.

Residues 87 to 131 adopt a coiled-coil conformation; sequence AEEQLSRIDSLQKKLIQVEGEKIEAIKRKESLTKDIEELINEFTE.

Belongs to the Mediator complex subunit 21 family. In terms of assembly, component of the Mediator complex.

Its subcellular location is the nucleus. Its function is as follows. Component of the Mediator complex, a coactivator involved in the regulated transcription of nearly all RNA polymerase II-dependent genes. Mediator functions as a bridge to convey information from gene-specific regulatory proteins to the basal RNA polymerase II transcription machinery. Mediator is recruited to promoters by direct interactions with regulatory proteins and serves as a scaffold for the assembly of a functional preinitiation complex with RNA polymerase II and the general transcription factors. This chain is Mediator of RNA polymerase II transcription subunit 21 (SRB7), found in Eremothecium gossypii (strain ATCC 10895 / CBS 109.51 / FGSC 9923 / NRRL Y-1056) (Yeast).